Here is a 116-residue protein sequence, read N- to C-terminus: Large ribosomal subunit protein uL22 (116 aa).

The protein belongs to the universal ribosomal protein uL22 family. In terms of assembly, part of the 50S ribosomal subunit.

Functionally, this protein binds specifically to 23S rRNA; its binding is stimulated by other ribosomal proteins, e.g. L4, L17, and L20. It is important during the early stages of 50S assembly. It makes multiple contacts with different domains of the 23S rRNA in the assembled 50S subunit and ribosome. Its function is as follows. The globular domain of the protein is located near the polypeptide exit tunnel on the outside of the subunit, while an extended beta-hairpin is found that lines the wall of the exit tunnel in the center of the 70S ribosome. The chain is Large ribosomal subunit protein uL22 from Wolbachia pipientis subsp. Culex pipiens (strain wPip).